Consider the following 258-residue polypeptide: Trans-aconitate 2-methyltransferase (258 aa).

It belongs to the methyltransferase superfamily. Tam family.

It is found in the cytoplasm. It catalyses the reaction trans-aconitate + S-adenosyl-L-methionine = (E)-3-(methoxycarbonyl)pent-2-enedioate + S-adenosyl-L-homocysteine. In terms of biological role, catalyzes the S-adenosylmethionine monomethyl esterification of trans-aconitate. This chain is Trans-aconitate 2-methyltransferase, found in Methylobacterium nodulans (strain LMG 21967 / CNCM I-2342 / ORS 2060).